The following is a 1634-amino-acid chain: Leucine-rich repeat-containing protein 37A3 (1634 aa).

The N-terminal stretch at 1–35 (MTSAQCPALACVMSPLRFWGPWPLLMWQLLWLLVK) is a signal peptide. The Extracellular segment spans residues 36–1581 (EAQPLEWVKD…ELPGYGYTKK (1546 aa)). Disordered regions lie at residues 53 to 104 (PLGP…ESTE), 129 to 154 (SQQD…KKDP), 172 to 531 (TPQS…VVVA), 619 to 642 (PEPT…KHPE), and 758 to 777 (EPTT…APRP). Residues 137-160 (LSPQERLPVSPKKLKKDPAQRWSL) form an LRR 1 repeat. Composition is skewed to polar residues over residues 172-189 (TPQS…STDT) and 223-237 (ETQN…QSSS). LRR repeat units follow at residues 230–253 (LEDI…LEEE) and 267–290 (ESSM…EDQA). Positions 238–249 (LQQEAPAQLPQL) are enriched in low complexity. A glycan (N-linked (GlcNAc...) asparagine) is linked at Asn-296. The segment covering 307–326 (TITSEPTNETESSQAQQETP) has biased composition (polar residues). The span at 358–368 (SEQQQPVQPSE) shows a compositional bias: low complexity. Polar residues predominate over residues 433–446 (LVHQEATTRLSGSG). Over residues 482–493 (SPEPINNENPSP) the composition is skewed to low complexity. Polar residues predominate over residues 760–770 (TTETGHSTALE). 6 LRR repeats span residues 864–887 (NGTF…VWKA), 888–911 (YSWT…SFEG), 912–935 (LLSL…TFEP), 937–959 (PFLK…TFQA), 963–987 (MQFL…LFKL), and 1002–1027 (LTTL…MACC). An N-linked (GlcNAc...) asparagine glycan is attached at Asn-1079. LRR repeat units lie at residues 1124 to 1146 (LPYF…KLPT) and 1151 to 1176 (LAKI…SIQK). 2 stretches are compositionally biased toward basic and acidic residues: residues 1181-1191 (EVGRQSIRREQ) and 1201-1216 (AEEK…ELKQ). Disordered stretches follow at residues 1181–1227 (EVGR…EKLA) and 1306–1329 (RFHK…KVRK). One copy of the LRR 12 repeat lies at 1359-1384 (FSSLRDLSPQENPFLEVSAPSEHFIE). The chain crosses the membrane as a helical span at residues 1582 to 1602 (LILALIVTGILTILIILLCLI). Residues 1603–1634 (EICCHRRSLQEDEEGFSRDSEAPTEEESEALP) lie on the Cytoplasmic side of the membrane. A disordered region spans residues 1614–1634 (DEEGFSRDSEAPTEEESEALP). The span at 1624–1634 (APTEEESEALP) shows a compositional bias: acidic residues.

The protein belongs to the LRRC37A family.

Its subcellular location is the membrane. The polypeptide is Leucine-rich repeat-containing protein 37A3 (LRRC37A3) (Homo sapiens (Human)).